We begin with the raw amino-acid sequence, 430 residues long: Synaptotagmin-11 (430 aa).

Residues 1–15 are Vesicular-facing; the sequence is MAEITNIRPSFDVSP. The chain crosses the membrane as a helical span at residues 16-36; that stretch reads VAAGLIGASVLVVCVSVTVFV. The Cytoplasmic portion of the chain corresponds to 37 to 430; it reads WTCCHQQAEK…VAKWHSLSEY (394 aa). Residues 132–154 form a disordered region; that stretch reads RSPMTSLTPGESKPTSPSSPEED. Phosphoserine is present on serine 133. Positions 140-150 are enriched in low complexity; it reads PGESKPTSPSS. C2 domains follow at residues 156–278 and 290–425; these read MLGS…QLTR and SRGE…AKWH. The Ca(2+) site is built by aspartate 249, serine 252, and aspartate 255.

The protein belongs to the synaptotagmin family. Homodimer. Can also form heterodimers. Interacts with PRKN. Interacts (via C2 2 domain) with AGO2 and SND1; the interaction with SND1 is direct. Interacts with KIF1A; the interaction increases in presence of calcium. Requires Ca(2+) as cofactor. Post-translationally, ubiquitinated, at least by PRKN, and targeted to the proteasome complex for degradation. Ubiquitination is inhibited by ATP13A2. Highly expressed in brain and at lower levels in other tissues.

It localises to the cytoplasmic vesicle membrane. The protein resides in the perikaryon. Its subcellular location is the golgi apparatus. It is found in the trans-Golgi network membrane. The protein localises to the recycling endosome membrane. It localises to the lysosome membrane. The protein resides in the cytoplasmic vesicle. Its subcellular location is the phagosome. It is found in the cell projection. The protein localises to the axon. It localises to the dendrite. The protein resides in the postsynaptic density. Its subcellular location is the clathrin-coated vesicle membrane. Its function is as follows. Synaptotagmin family member involved in vesicular and membrane trafficking which does not bind Ca(2+). Inhibits clathrin-mediated and bulk endocytosis in neurons, functions to ensure precision in vesicle retrieval. Plays an important role in dopamine transmission by regulating endocytosis and the vesicle-recycling process. Essential component of a neuronal vesicular trafficking pathway that differs from the synaptic vesicle trafficking pathway but is crucial for development and synaptic plasticity. In macrophages and microglia, inhibits the conventional cytokine secretion, of at least IL6 and TNF, and phagocytosis. In astrocytes, regulates lysosome exocytosis, mechanism required for the repair of injured astrocyte cell membrane. Required for the ATP13A2-mediated regulation of the autophagy-lysosome pathway. This is Synaptotagmin-11 from Rattus norvegicus (Rat).